The chain runs to 696 residues: Elongation factor G (696 aa).

Residues 8–290 (ERYRNIGVMA…AVLDYLPSPA (283 aa)) form the tr-type G domain. GTP is bound by residues 17–24 (AHIDAGKT), 88–92 (DTPGH), and 142–145 (NKMD).

The protein belongs to the TRAFAC class translation factor GTPase superfamily. Classic translation factor GTPase family. EF-G/EF-2 subfamily.

Its subcellular location is the cytoplasm. In terms of biological role, catalyzes the GTP-dependent ribosomal translocation step during translation elongation. During this step, the ribosome changes from the pre-translocational (PRE) to the post-translocational (POST) state as the newly formed A-site-bound peptidyl-tRNA and P-site-bound deacylated tRNA move to the P and E sites, respectively. Catalyzes the coordinated movement of the two tRNA molecules, the mRNA and conformational changes in the ribosome. This Nitrosospira multiformis (strain ATCC 25196 / NCIMB 11849 / C 71) protein is Elongation factor G.